Consider the following 329-residue polypeptide: tRNA N6-adenosine threonylcarbamoyltransferase (329 aa).

Fe cation contacts are provided by H108, H112, and Y129. Substrate contacts are provided by residues 129 to 133, D161, E182, and S261; that span reads YVSGG. D289 lines the Fe cation pocket.

Belongs to the KAE1 / TsaD family. The cofactor is Fe(2+).

Its subcellular location is the cytoplasm. The enzyme catalyses L-threonylcarbamoyladenylate + adenosine(37) in tRNA = N(6)-L-threonylcarbamoyladenosine(37) in tRNA + AMP + H(+). Required for the formation of a threonylcarbamoyl group on adenosine at position 37 (t(6)A37) in tRNAs that read codons beginning with adenine. Is probably involved in the transfer of the threonylcarbamoyl moiety of threonylcarbamoyl-AMP (TC-AMP) to the N6 group of A37. The protein is tRNA N6-adenosine threonylcarbamoyltransferase of Ignicoccus hospitalis (strain KIN4/I / DSM 18386 / JCM 14125).